Reading from the N-terminus, the 90-residue chain is Kunitz-type serine protease inhibitor bitisilin-1 (90 aa).

An N-terminal signal peptide occupies residues 1-24; the sequence is MSSGGLLLLLGLLTLWAELTPVSG. The 51-residue stretch at 31-81 folds into the BPTI/Kunitz inhibitor domain; the sequence is CNLPADTGPCKAYEPRFYYDSVSKECQKFTYGGCKGNSNNFESMDECRKTC. Disulfide bonds link Cys-31–Cys-81, Cys-40–Cys-64, and Cys-56–Cys-77.

It belongs to the venom Kunitz-type family. As to expression, expressed by the venom gland.

The protein resides in the secreted. Functionally, serine protease inhibitor. The chain is Kunitz-type serine protease inhibitor bitisilin-1 from Bitis gabonica (Gaboon adder).